We begin with the raw amino-acid sequence, 142 residues long: DNA-directed RNA polymerases I, II, and III subunit rpabc3 (142 aa).

A non-specific ssDNA binding region spans residues 16–40 (DPDGKKFDRVSRFVCYSENYEMDLQ).

The protein belongs to the eukaryotic RPB8 RNA polymerase subunit family. In terms of assembly, component of the RNA polymerase I (Pol I), RNA polymerase II (Pol II) and RNA polymerase III (Pol III) complexes consisting of at least 13, 12 and 17 subunits, respectively. Directly interacts with POLR2A.

It is found in the nucleus. The protein localises to the nucleolus. Its function is as follows. DNA-dependent RNA polymerase catalyzes the transcription of DNA into RNA using the four ribonucleoside triphosphates as substrates. Common component of RNA polymerases I, II and III which synthesize ribosomal RNA precursors, mRNA precursors and many functional non-coding RNAs, and small RNAs, such as 5S rRNA and tRNAs, respectively. This Dictyostelium discoideum (Social amoeba) protein is DNA-directed RNA polymerases I, II, and III subunit rpabc3 (polr2h).